Reading from the N-terminus, the 51-residue chain is Lantibiotic flavucin (51 aa).

Positions 1–20 (MSDFTLDFAEGDAADTVSPQ) are excised as a propeptide. A cross-link (lanthionine (Ser-Cys)) is located at residues 23 to 27 (SKSLC). Cross-links (beta-methyllanthionine (Thr-Cys)) lie at residues 28–31 (TPGC), 33–38 (TGWMMC), and 42–45 (TKGC).

This sequence belongs to the type A lantibiotic family. Post-translationally, maturation of lantibiotics involves the enzymatic conversion of Thr, and Ser into dehydrated AA and the formation of thioether bonds with cysteine. This is followed by membrane translocation and cleavage of the modified precursor.

With respect to regulation, antimicrobial activity depends on the dehydration degree and integrity of flavucin. Lanthionine-containing peptide antibiotic (lantibiotic) active on certain Gram-positive bacteria. The bactericidal activity of lantibiotics is based on depolarization of energized bacterial cytoplasmic membranes, initiated by the formation of aqueous transmembrane pores. Flavucin has high antimicrobial activity against several pathogenic bacteria such as S.aureus, E.faecalis, E.faecium and L.monocytogenes. Is also active against the Gram-negative P.aeruginosa. This Corynebacterium lipophiloflavum (strain ATCC 700352 / DSM 44291 / CCUG 37336 / JCM 10383 / DMMZ 1944) protein is Lantibiotic flavucin.